The chain runs to 78 residues: MAKAPSPLVFPIIFLIIFALVEPNMGCIQIIGRCIKIPDCSASCRKFLGPHASGYCDNDGAGGTCICTYPCQTKEIHM.

The first 23 residues, methionine 1–proline 23, serve as a signal peptide directing secretion. Cystine bridges form between cysteine 27–cysteine 71, cysteine 34–cysteine 56, cysteine 40–cysteine 65, and cysteine 44–cysteine 67.

It belongs to the DEFL family.

The protein resides in the secreted. The protein is Defensin-like protein 173 (LCR63) of Arabidopsis thaliana (Mouse-ear cress).